The chain runs to 555 residues: WRKY transcription factor WRKY24 (555 aa).

Disordered regions lie at residues 133–183 (TAPA…AGAN) and 197–248 (SEMA…CTFP). A compositionally biased stretch (low complexity) spans 163 to 183 (QQQQQPWGYQQQPAGMDAGAN). Residues 214-278 (SQRRSSDDGY…YKGTHNHAKP (65 aa)) constitute a DNA-binding region (WRKY 1). A Nuclear localization signal motif is present at residues 253–259 (KKKVERS). A disordered region spans residues 270 to 365 (KGTHNHAKPQ…DGEGISMAGN (96 aa)). Polar residues-rich tracts occupy residues 277 to 294 (KPQN…QVLQ) and 310 to 320 (TAATPENSSAS). Basic and acidic residues predominate over residues 347-356 (DSKRWRKDGD). Positions 379–444 (SDIDILDDGY…YEGKHNHDVP (66 aa)) form a DNA-binding region, WRKY 2. The tract at residues 466–555 (HPYLPNQPPP…DDMFFQNSLY (90 aa)) is transcription repression of gibberellic acid (GA)-induced promoters. The segment at 514 to 555 (FDDARGSYMSQHQQQQRQNDAMHASRAKEEPGDDMFFQNSLY) is disordered.

This sequence belongs to the WRKY group II-a family. As to expression, expressed in aleurone cells. Mostly expressed in aleurone layers and leaves, and, to a lower extent, in roots, panicles and embryos.

It is found in the nucleus. Its function is as follows. Transcription activator. Interacts specifically with the W box (5'-(T)TGAC[CT]-3'), a frequently occurring elicitor-responsive cis-acting element. Negative regulator of both gibberellic acid (GA) and abscisic acid (ABA) signaling in aleurone cells, probably by interfering with GAM1, via the specific repression of GA- and ABA-induced promoters. The polypeptide is WRKY transcription factor WRKY24 (Oryza sativa subsp. japonica (Rice)).